The primary structure comprises 513 residues: Probable G-protein coupled receptor Mth-like 9 (513 aa).

Positions 1 to 19 are cleaved as a signal peptide; that stretch reads MVSPLIILLIIWLSVGAKS. Residues 20–207 lie on the Extracellular side of the membrane; that stretch reads VEIASINHPC…NCERFQTGYR (188 aa). Disulfide bonds link Cys29–Cys82, Cys84–Cys89, Cys93–Cys181, and Cys94–Cys107. Asn36 is a glycosylation site (N-linked (GlcNAc...) asparagine). 3 N-linked (GlcNAc...) asparagine glycosylation sites follow: Asn106, Asn125, and Asn165. Residues 208 to 228 form a helical membrane-spanning segment; it reads VWIYAICSIIAIIINIFILSL. Residues 229–242 are Cytoplasmic-facing; the sequence is LGSVRDARKSHYGQ. The chain crosses the membrane as a helical span at residues 243–263; that stretch reads LIIYYLLSMIVGYSLLVYLAL. Over 264–276 the chain is Extracellular; it reads KNPMKLSHVACRN. Residues 277–297 form a helical membrane-spanning segment; sequence IGFLAYFCIMLSFVFLAICSL. Topologically, residues 298–314 are cytoplasmic; that stretch reads DFLLKFKQKAVRSSVRR. A helical membrane pass occupies residues 315–335; sequence LSLALAVLAVIGLRFLVSLAQ. The Extracellular portion of the chain corresponds to 336–360; that stretch reads DSKLPKHFKPGMGEDYCWFDVRTWG. A helical transmembrane segment spans residues 361–381; that stretch reads ILIYYYGPIALLLIFSIVCCL. Residues 382–403 lie on the Cytoplasmic side of the membrane; the sequence is KAYFSIYELPPDTQYILGTQLK. A helical membrane pass occupies residues 404 to 424; it reads IVKTHFYAFSAYIVGVFAVWI. The Extracellular segment spans residues 425-438; that stretch reads REIVVYIMARVREH. Residues 439–459 traverse the membrane as a helical segment; the sequence is FFIIDFWSGICILGLAIAGFI. Topologically, residues 460–513 are cytoplasmic; it reads LLLGKNLHVKSWWAINVESSQTDLSIINARVYKFDEKGDLKSSDSPYKPTVTSL.

Belongs to the G-protein coupled receptor 2 family. Mth subfamily.

It is found in the cell membrane. This Drosophila melanogaster (Fruit fly) protein is Probable G-protein coupled receptor Mth-like 9 (mthl9).